A 565-amino-acid chain; its full sequence is Probable alpha-L-arabinofuranosidase A (565 aa).

Residues 1-19 form the signal peptide; the sequence is MPLSAAIKSSLSVSVRADA. N-linked (GlcNAc...) asparagine glycans are attached at residues asparagine 71, asparagine 91, asparagine 128, asparagine 303, asparagine 362, asparagine 486, and asparagine 501.

This sequence belongs to the glycosyl hydrolase 51 family.

Its subcellular location is the secreted. It catalyses the reaction Hydrolysis of terminal non-reducing alpha-L-arabinofuranoside residues in alpha-L-arabinosides.. It participates in glycan metabolism; L-arabinan degradation. Functionally, alpha-L-arabinofuranosidase involved in the degradation of arabinoxylan, a major component of plant hemicellulose. Acts only on small linear 1,5-alpha-linked L-arabinofuranosyl oligosaccharides. This chain is Probable alpha-L-arabinofuranosidase A (abfA), found in Emericella nidulans (strain FGSC A4 / ATCC 38163 / CBS 112.46 / NRRL 194 / M139) (Aspergillus nidulans).